Consider the following 270-residue polypeptide: Aliphatic sulfonates import ATP-binding protein SsuB 2 (270 aa).

Positions 17–241 (LLDLRIARKL…PRDRRDPSLA (225 aa)) constitute an ABC transporter domain. 50 to 57 (GPSGCGKS) lines the ATP pocket.

Belongs to the ABC transporter superfamily. Aliphatic sulfonates importer (TC 3.A.1.17.2) family. As to quaternary structure, the complex is composed of two ATP-binding proteins (SsuB), two transmembrane proteins (SsuC) and a solute-binding protein (SsuA).

The protein resides in the cell inner membrane. It carries out the reaction ATP + H2O + aliphatic sulfonate-[sulfonate-binding protein]Side 1 = ADP + phosphate + aliphatic sulfonateSide 2 + [sulfonate-binding protein]Side 1.. Part of the ABC transporter complex SsuABC involved in aliphatic sulfonates import. Responsible for energy coupling to the transport system. This Burkholderia cenocepacia (strain HI2424) protein is Aliphatic sulfonates import ATP-binding protein SsuB 2.